The primary structure comprises 325 residues: Lipoyl synthase (325 aa).

Residues 1 to 24 (MPIAPDRVRHPEKANRPDNPIQRK) are disordered. The [4Fe-4S] cluster site is built by Cys54, Cys59, Cys65, Cys80, Cys84, Cys87, and Ser293. The 217-residue stretch at 66-282 (WKKKHATFMI…VTVGRGKGFL (217 aa)) folds into the Radical SAM core domain.

This sequence belongs to the radical SAM superfamily. Lipoyl synthase family. Requires [4Fe-4S] cluster as cofactor.

It is found in the cytoplasm. The catalysed reaction is [[Fe-S] cluster scaffold protein carrying a second [4Fe-4S](2+) cluster] + N(6)-octanoyl-L-lysyl-[protein] + 2 oxidized [2Fe-2S]-[ferredoxin] + 2 S-adenosyl-L-methionine + 4 H(+) = [[Fe-S] cluster scaffold protein] + N(6)-[(R)-dihydrolipoyl]-L-lysyl-[protein] + 4 Fe(3+) + 2 hydrogen sulfide + 2 5'-deoxyadenosine + 2 L-methionine + 2 reduced [2Fe-2S]-[ferredoxin]. It functions in the pathway protein modification; protein lipoylation via endogenous pathway; protein N(6)-(lipoyl)lysine from octanoyl-[acyl-carrier-protein]: step 2/2. Its function is as follows. Catalyzes the radical-mediated insertion of two sulfur atoms into the C-6 and C-8 positions of the octanoyl moiety bound to the lipoyl domains of lipoate-dependent enzymes, thereby converting the octanoylated domains into lipoylated derivatives. This is Lipoyl synthase from Rhodospirillum centenum (strain ATCC 51521 / SW).